The primary structure comprises 289 residues: Probable aquaporin PIP-type 7a (289 aa).

The interval methionine 1–proline 39 is disordered. Residues methionine 1–glycine 57 are Cytoplasmic-facing. A helical membrane pass occupies residues isoleucine 58–valine 78. Residues valine 79–glutamine 91 are Extracellular-facing. A helical membrane pass occupies residues glycine 92–serine 112. The Cytoplasmic segment spans residues glycine 113 to alanine 135. The NPA 1 motif lies at asparagine 117–alanine 119. The helical transmembrane segment at isoleucine 136–phenylalanine 156 threads the bilayer. Topologically, residues glutamate 157–lysine 178 are extracellular. Residues glycine 179 to alanine 199 form a helical membrane-spanning segment. Residues threonine 200–proline 212 lie on the Cytoplasmic side of the membrane. Residues isoleucine 213–isoleucine 233 form a helical membrane-spanning segment. Over threonine 234 to tryptophan 260 the chain is Extracellular. An NPA 2 motif is present at residues asparagine 239–alanine 241. The chain crosses the membrane as a helical span at residues isoleucine 261 to isoleucine 281. The Cytoplasmic segment spans residues arginine 282 to lysine 289.

This sequence belongs to the MIP/aquaporin (TC 1.A.8) family. PIP (TC 1.A.8.11) subfamily.

The protein resides in the cell membrane. Aquaporins facilitate the transport of water and small neutral solutes across cell membranes. This is Probable aquaporin PIP-type 7a (TRG-31) from Pisum sativum (Garden pea).